A 207-amino-acid polypeptide reads, in one-letter code: UPF0126 inner membrane protein YadS (207 aa).

Residues 1 to 21 (MLVYWLDIVGTAVFAISGVLL) form a helical membrane-spanning segment. Over 22-29 (AGKLRMDP) the chain is Cytoplasmic. A helical transmembrane segment spans residues 30–50 (FGVLVLGVVTAVGGGTIRDMA). The Periplasmic portion of the chain corresponds to 51-58 (LDHGPVFW). The helical transmembrane segment at 59-79 (VKDPTDLVVAMVTSMLTIVLV) threads the bilayer. Over 80 to 85 (RQPRRL) the chain is Cytoplasmic. The helical transmembrane segment at 86–106 (PKWMLPVLDAVGLAVFVGIGV) threads the bilayer. The Periplasmic portion of the chain corresponds to 107–112 (NKAFNA). The helical transmembrane segment at 113–133 (EAGPLIAVCMGVITGVGGGII) threads the bilayer. At 134-148 (RDVLAREIPMILRTE) the chain is on the cytoplasmic side. A helical transmembrane segment spans residues 149–169 (IYATACIIGGIVHATAYYTFS). Residue Val-170 is a topological domain, periplasmic. A helical transmembrane segment spans residues 171-191 (PLETASMMGMVVTLLIRLAAI). The Cytoplasmic segment spans residues 192–207 (RWHLKLPTFALDENGR).

The protein belongs to the UPF0126 family.

It localises to the cell inner membrane. This Escherichia coli O6:H1 (strain CFT073 / ATCC 700928 / UPEC) protein is UPF0126 inner membrane protein YadS (yadS).